The following is a 389-amino-acid chain: Chalcone synthase A (389 aa).

The active site involves Cys164.

It belongs to the thiolase-like superfamily. Chalcone/stilbene synthases family. In terms of tissue distribution, major expressed member of the gene family in various floral tissues and in seedlings treated with UV light. It is relatively low expressed in tissue culture material.

The enzyme catalyses (E)-4-coumaroyl-CoA + 3 malonyl-CoA + 3 H(+) = 2',4,4',6'-tetrahydroxychalcone + 3 CO2 + 4 CoA. It participates in secondary metabolite biosynthesis; flavonoid biosynthesis. The primary product of this enzyme is 4,2',4',6'-tetrahydroxychalcone (also termed naringenin-chalcone or chalcone) which can under specific conditions spontaneously isomerize into naringenin. This is Chalcone synthase A (CHSA) from Petunia hybrida (Petunia).